Reading from the N-terminus, the 271-residue chain is PA-phosphatase related-family protein DDB_G0284367 (271 aa).

6 helical membrane-spanning segments follow: residues 23–43, 68–88, 102–122, 150–170, 181–201, and 211–231; these read FLCL…IPPF, IVPV…VFIG, AALG…ILKV, FPSG…FYLC, GNIL…LVAV, and FSDI…VYFM.

This sequence belongs to the PA-phosphatase related phosphoesterase family.

The protein localises to the membrane. The polypeptide is PA-phosphatase related-family protein DDB_G0284367 (Dictyostelium discoideum (Social amoeba)).